We begin with the raw amino-acid sequence, 315 residues long: 4-hydroxy-3-methylbut-2-enyl diphosphate reductase (315 aa).

Cys-12 serves as a coordination point for [4Fe-4S] cluster. Residues His-41 and His-74 each contribute to the (2E)-4-hydroxy-3-methylbut-2-enyl diphosphate site. Positions 41 and 74 each coordinate dimethylallyl diphosphate. The isopentenyl diphosphate site is built by His-41 and His-74. Cys-96 contacts [4Fe-4S] cluster. Residue His-124 coordinates (2E)-4-hydroxy-3-methylbut-2-enyl diphosphate. His-124 serves as a coordination point for dimethylallyl diphosphate. Residue His-124 participates in isopentenyl diphosphate binding. The active-site Proton donor is Glu-126. Thr-167 serves as a coordination point for (2E)-4-hydroxy-3-methylbut-2-enyl diphosphate. Cys-197 contacts [4Fe-4S] cluster. Residues Ser-225, Ser-226, Asn-227, and Ser-269 each contribute to the (2E)-4-hydroxy-3-methylbut-2-enyl diphosphate site. Dimethylallyl diphosphate contacts are provided by Ser-225, Ser-226, Asn-227, and Ser-269. Residues Ser-225, Ser-226, Asn-227, and Ser-269 each coordinate isopentenyl diphosphate.

It belongs to the IspH family. Homodimer. It depends on [4Fe-4S] cluster as a cofactor.

It carries out the reaction isopentenyl diphosphate + 2 oxidized [2Fe-2S]-[ferredoxin] + H2O = (2E)-4-hydroxy-3-methylbut-2-enyl diphosphate + 2 reduced [2Fe-2S]-[ferredoxin] + 2 H(+). The enzyme catalyses dimethylallyl diphosphate + 2 oxidized [2Fe-2S]-[ferredoxin] + H2O = (2E)-4-hydroxy-3-methylbut-2-enyl diphosphate + 2 reduced [2Fe-2S]-[ferredoxin] + 2 H(+). It participates in isoprenoid biosynthesis; dimethylallyl diphosphate biosynthesis; dimethylallyl diphosphate from (2E)-4-hydroxy-3-methylbutenyl diphosphate: step 1/1. Its pathway is isoprenoid biosynthesis; isopentenyl diphosphate biosynthesis via DXP pathway; isopentenyl diphosphate from 1-deoxy-D-xylulose 5-phosphate: step 6/6. In terms of biological role, catalyzes the conversion of 1-hydroxy-2-methyl-2-(E)-butenyl 4-diphosphate (HMBPP) into a mixture of isopentenyl diphosphate (IPP) and dimethylallyl diphosphate (DMAPP). Acts in the terminal step of the DOXP/MEP pathway for isoprenoid precursor biosynthesis. In Wigglesworthia glossinidia brevipalpis, this protein is 4-hydroxy-3-methylbut-2-enyl diphosphate reductase.